The sequence spans 201 residues: Proteasome subunit beta type-2 (201 aa).

Position 1 is an N-acetylmethionine (M1).

This sequence belongs to the peptidase T1B family. The 26S proteasome consists of a 20S proteasome core and two 19S regulatory subunits. The 20S proteasome core is a barrel-shaped complex made of 28 subunits that are arranged in four stacked rings. The two outer rings are each formed by seven alpha subunits, and the two inner rings are formed by seven beta subunits. The proteolytic activity is exerted by three beta-subunits PSMB5, PSMB6 and PSMB7.

The protein resides in the cytoplasm. It localises to the nucleus. In terms of biological role, non-catalytic component of the 20S core proteasome complex involved in the proteolytic degradation of most intracellular proteins. This complex plays numerous essential roles within the cell by associating with different regulatory particles. Associated with two 19S regulatory particles, forms the 26S proteasome and thus participates in the ATP-dependent degradation of ubiquitinated proteins. The 26S proteasome plays a key role in the maintenance of protein homeostasis by removing misfolded or damaged proteins that could impair cellular functions, and by removing proteins whose functions are no longer required. Associated with the PA200 or PA28, the 20S proteasome mediates ubiquitin-independent protein degradation. This type of proteolysis is required in several pathways including spermatogenesis (20S-PA200 complex) or generation of a subset of MHC class I-presented antigenic peptides (20S-PA28 complex). The sequence is that of Proteasome subunit beta type-2 (PSMB2) from Bos taurus (Bovine).